Reading from the N-terminus, the 687-residue chain is Polyphosphate kinase (687 aa).

N45 contributes to the ATP binding site. Mg(2+) contacts are provided by R375 and R405. H435 serves as the catalytic Phosphohistidine intermediate. ATP is bound by residues Y472, R568, and H596.

This sequence belongs to the polyphosphate kinase 1 (PPK1) family. Mg(2+) is required as a cofactor. In terms of processing, an intermediate of this reaction is the autophosphorylated ppk in which a phosphate is covalently linked to a histidine residue through a N-P bond.

The enzyme catalyses [phosphate](n) + ATP = [phosphate](n+1) + ADP. In terms of biological role, catalyzes the reversible transfer of the terminal phosphate of ATP to form a long-chain polyphosphate (polyP). In Burkholderia multivorans (strain ATCC 17616 / 249), this protein is Polyphosphate kinase.